The following is a 227-amino-acid chain: Response regulator protein TodT (227 aa).

In terms of domain architecture, Response regulatory spans 28–142 (VIYILDDDNA…ELLGAIRAAL (115 aa)). D77 is subject to 4-aspartylphosphate. In terms of domain architecture, HTH luxR-type spans 158-223 (LKENYESLSK…DLVRVTERLK (66 aa)). The segment at residues 182–201 (NKQTALELDISEATVKVHRH) is a DNA-binding region (H-T-H motif).

Post-translationally, phosphorylated by TodS.

Its subcellular location is the cytoplasm. Its function is as follows. Member of the two-component regulatory system TodS/TodT involved in the regulation of toluene degradation. Phosphorylated TodT activates transcription of the tod operon (todXFC1C2BADEGIH). Binds specifically to a 6-bp palindromic DNA structure in the tod promoter region. The chain is Response regulator protein TodT (todT) from Pseudomonas putida (strain ATCC 700007 / DSM 6899 / JCM 31910 / BCRC 17059 / LMG 24140 / F1).